We begin with the raw amino-acid sequence, 161 residues long: MPSFDVVSELDKHEVQNAVDNAIKELDRRYDLKGKGSFEFKDKDQTVMLTAEEEFQLEAMLEILRLALVKRKIDVKCLETKDPYPSGKEKKQEAKFREGIDKDLAKKIVATIKDGKLKVQAAIQGEQVRVTGKKRDDLQEAIALLRTKEFDMPLQFNNFRD.

Belongs to the YajQ family.

Nucleotide-binding protein. The polypeptide is Nucleotide-binding protein PputGB1_4497 (Pseudomonas putida (strain GB-1)).